We begin with the raw amino-acid sequence, 518 residues long: Putative N-acetylmuramoyl-L-alanine amidase YrvJ (518 aa).

The first 27 residues, 1–27, serve as a signal peptide directing secretion; the sequence is MNKKYFVLIVCIIFTSALFPTFSSVTA. SH3b domains follow at residues 29–91, 102–164, 181–243, and 258–320; these read QGEA…ITKE, SDTV…TSGG, STTG…LTSS, and AKKA…VQTS. 2 disordered regions span residues 94–121 and 160–186; these read ASTS…PGTS and VTSG…TGTV. Composition is skewed to low complexity over residues 95-108 and 160-169; these read STSS…VTST and VTSGGSSSAS. Residues 322–352 form a disordered region; that stretch reads SAEEAGEPPVSDSPSGNGSLNNKTIIVDPGH. A compositionally biased stretch (polar residues) spans 333–345; it reads DSPSGNGSLNNKT. The 169-residue stretch at 346 to 514 folds into the MurNAc-LAA domain; it reads IIVDPGHGGK…VTDGIESGLE (169 aa).

The protein belongs to the N-acetylmuramoyl-L-alanine amidase 3 family.

Its subcellular location is the secreted. It is found in the cell wall. It carries out the reaction Hydrolyzes the link between N-acetylmuramoyl residues and L-amino acid residues in certain cell-wall glycopeptides.. Functionally, probably involved in cell-wall metabolism. This is Putative N-acetylmuramoyl-L-alanine amidase YrvJ (yrvJ) from Bacillus subtilis (strain 168).